A 93-amino-acid polypeptide reads, in one-letter code: Small ribosomal subunit protein uS19 (93 aa).

A disordered region spans residues 73–93 (EFSPTRTFRGHVKDDRKSKRR). Residues 83–93 (HVKDDRKSKRR) are compositionally biased toward basic and acidic residues.

The protein belongs to the universal ribosomal protein uS19 family.

Functionally, protein S19 forms a complex with S13 that binds strongly to the 16S ribosomal RNA. The sequence is that of Small ribosomal subunit protein uS19 from Streptomyces coelicolor (strain ATCC BAA-471 / A3(2) / M145).